The sequence spans 262 residues: Aminoglycoside (3'') (9) adenylyltransferase (262 aa).

Residues 1-157 (MTLSIPPSIQ…ERAERLFTPA (157 aa)) are adenylyltransferase domain. ATP contacts are provided by Ser36, Ser46, and Asp47. Asp47, Asp49, and Glu87 together coordinate Mg(2+). Glu87 (proton acceptor) is an active-site residue. Asp130 lines the ATP pocket. Residues 158 to 262 (PAAQLLKALR…AKAHIPTQFT (105 aa)) are helical domain. Residues 173–178 (WQSTAD) and His185 each bind streptomycin. Residues Lys205 and Tyr231 each coordinate ATP.

In terms of assembly, monomer.

The enzyme catalyses streptomycin + ATP = 3''-O-adenylylstreptomycin + diphosphate. It catalyses the reaction spectinomycin + ATP = 9-O-adenylylspectinomycin + diphosphate. Functionally, mediates bacterial resistance to the antibiotics streptomycin and spectinomycin, does not confer resistance to kanamycin. Binds ATP first, then antibiotic. The chain is Aminoglycoside (3'') (9) adenylyltransferase (aadA) from Salmonella typhimurium (strain LT2 / SGSC1412 / ATCC 700720).